The following is a 245-amino-acid chain: 1-(5-phosphoribosyl)-5-[(5-phosphoribosylamino)methylideneamino] imidazole-4-carboxamide isomerase (245 aa).

Asp8 functions as the Proton acceptor in the catalytic mechanism. Asp129 serves as the catalytic Proton donor.

The protein belongs to the HisA/HisF family.

It is found in the cytoplasm. It carries out the reaction 1-(5-phospho-beta-D-ribosyl)-5-[(5-phospho-beta-D-ribosylamino)methylideneamino]imidazole-4-carboxamide = 5-[(5-phospho-1-deoxy-D-ribulos-1-ylimino)methylamino]-1-(5-phospho-beta-D-ribosyl)imidazole-4-carboxamide. The protein operates within amino-acid biosynthesis; L-histidine biosynthesis; L-histidine from 5-phospho-alpha-D-ribose 1-diphosphate: step 4/9. The polypeptide is 1-(5-phosphoribosyl)-5-[(5-phosphoribosylamino)methylideneamino] imidazole-4-carboxamide isomerase (Rhodopseudomonas palustris (strain HaA2)).